Reading from the N-terminus, the 791-residue chain is MAASALQQPSYLLANLKADWTNKPLHQRCHELCKIIDDYPAKELHAIFPWLVECVFGSLDGILTGWNLRFLQARSAEYSIAMEFLDPSGPMMKLVYKLQAEEYKYEFPISYLPGPIKSSIHAGVLPDCPLFHNKIQFPMSGLLFLNPFEYYMFNFASSLIAPKNYPQGQHGSSSDSAYFVLVDTYLKYFLPTEGNVPPSPFSDTRGTVASPAPRSTNVPYVGYGGHSTSLLKRHITHQSSVNADPAAQEIWRSETLLQVFVEMWLHHYSLEMYQKLQSPQVKEPFMPSEEHVLVVRLLVKHLHTFSSSLKPESISSSPSAHSHSSPLEELKRVVVQRFVQQKLYVFLQHCFGHWPLDASFRAVLETWLSYIQPWRYTGDKNNTQTDGPNRTVPDKWASFVQENLLLYTKLFQGFLNRAMRTDLVNAKNALMVFRVAKVFAQPSLSEMIQKGEQLFLEPEHAILQRHNRVFLTPSHGGSFLSARQPMGTDNVFKVKSHVYSLEGQDCQYNLMFGPDQRKNVLKLIQIIAQARQTAKRISDHSTEMAANNSFLSWFGVGSPDHNSTFTGGEMDEMGGEGVKKTHEFLDKALDYLCQIFRLNAGQLSQLISNVASVDNNGASKQLPDCIPSENGLVLTDLGRLQIINGLRRFEIEYQGDPELQPIRSYENAFLVRLLFQISSFINERLGEHMEVLCSRQDFLGSVGRHYLSSSSAVVEQRRKSPVTRQMRDRPQRARLSLRALASYRTLLTLLLLYMLFALLSFGLFSSTGLILIISFLYELLSNFFHEKLKTH.

The helical transmembrane segment at 755–775 (LFALLSFGLFSSTGLILIISF) threads the bilayer.

Mg(2+) is required as a cofactor.

It localises to the endoplasmic reticulum membrane. It is found in the golgi apparatus membrane. The protein localises to the nucleus envelope. The protein resides in the cell membrane. Its subcellular location is the sarcolemma. The enzyme catalyses a sphingomyelin + H2O = phosphocholine + an N-acylsphing-4-enine + H(+). Catalyzes the hydrolysis of membrane sphingomyelin to form phosphorylcholine and ceramide. It has a relevant role in the homeostasis of membrane sphingolipids, thereby influencing membrane integrity, and endoplasmic reticulum organization and function. May sensitize cells to DNA damage-induced apoptosis. The chain is Sphingomyelin phosphodiesterase 4 (smpd4) from Danio rerio (Zebrafish).